Consider the following 510-residue polypeptide: MIWHVQNENFILDSTRIFMKAFHLLLFDGSLIFPECILIFGLILLLMIDSTSDQKDIPWLYFISSTSLVLSITALLFRWREEPMISFSGNFQTNNFNEIFQFLILLCSTLCIPLSVEYIECTEMAITEFLLFVLTATLGGMFLCGANDLITIFVAPECFSLCSYLLSGYTKKDVRSNEATMKYLLMGGASSSILVHGFSWLYGSSGGEIELQEIVNGLINTQMYNSPGISIALIFITVGIGFKLSPAPSHQWTPDVYEGSPTPVVAFLSVTSKVAASASATRIFDIPFYFSSNEWHLLLEILAILSMILGNLIAITQTSMKRMLAYSSIGQIGYVIIGIIVGDSNDGYASMITYMLFYISMNLGTFACIVLFGLRTGTDNIRDYAGLYTKDPFLALSLALCLLSLGGLPPLAGFFGKLYLFWCGWQAGLYFLVLIGLLTSVVSIYYYLKIIKLLMTGRNQEITPHVRNYRRSPLRSNNSIELSMIVCVIASTIPGISMNPIIAIAQDSLF.

A run of 13 helical transmembrane segments spans residues 24–44, 57–77, 99–119, 124–144, 149–169, 183–203, 227–247, 295–315, 323–343, 354–374, 395–415, 418–438, and 484–504; these read LLLFDGSLIFPECILIFGLIL, IPWLYFISSTSLVLSITALLF, IFQFLILLCSTLCIPLSVEYI, MAITEFLLFVLTATLGGMFLC, LITIFVAPECFSLCSYLLSGY, YLLMGGASSSILVHGFSWLYG, PGISIALIFITVGIGFKLSPA, WHLLLEILAILSMILGNLIAI, MLAYSSIGQIGYVIIGIIVGD, YMLFYISMNLGTFACIVLFGL, ALSLALCLLSLGGLPPLAGFF, LYLFWCGWQAGLYFLVLIGLL, and MIVCVIASTIPGISMNPIIAI.

This sequence belongs to the complex I subunit 2 family. In terms of assembly, NDH is composed of at least 16 different subunits, 5 of which are encoded in the nucleus.

It localises to the plastid. The protein localises to the chloroplast thylakoid membrane. The catalysed reaction is a plastoquinone + NADH + (n+1) H(+)(in) = a plastoquinol + NAD(+) + n H(+)(out). It catalyses the reaction a plastoquinone + NADPH + (n+1) H(+)(in) = a plastoquinol + NADP(+) + n H(+)(out). NDH shuttles electrons from NAD(P)H:plastoquinone, via FMN and iron-sulfur (Fe-S) centers, to quinones in the photosynthetic chain and possibly in a chloroplast respiratory chain. The immediate electron acceptor for the enzyme in this species is believed to be plastoquinone. Couples the redox reaction to proton translocation, and thus conserves the redox energy in a proton gradient. The polypeptide is NAD(P)H-quinone oxidoreductase subunit 2 A, chloroplastic (Solanum tuberosum (Potato)).